The primary structure comprises 332 residues: F-box/SPRY domain-containing protein 1 (332 aa).

Residues 1–10 (MTENNEETIV) are compositionally biased toward acidic residues. The segment at 1–81 (MTENNEETIV…RRSPRRPEVS (81 aa)) is disordered. A compositionally biased stretch (polar residues) spans 15–24 (CNLTSSTPMK). Positions 79–127 (EVSASRLPLKVLNQIFQYLSLKDLRSAMLTCHSWNNALSMEDSDIWQQL) constitute an F-box domain. A B30.2/SPRY domain is found at 138-330 (SDPFLFVELR…VTMVYVGSPQ (193 aa)).

Belongs to the FBXO45/Fsn family. Component of an SCF (SKP1-CUL1-F-box protein) E3 ubiquitin ligase complex composed of cul-1, fsn-1, rpm-1 and skr-1. Interacts (via SPRY domain) with scd-2 (via cytoplasmic domain). Interacts (via SPRY domain) with convertase egl-3 (via C-terminus).

The protein resides in the synapse. It functions in the pathway protein modification; protein ubiquitination. Its function is as follows. Component of a SCF (SKP1-CUL1-F-box protein) E3 ubiquitin ligase complex which is required for the restriction and/or maturation of synapses in GABAergic neuromuscular junction (NMJ) presynaptic neurons. Promotes NRJ synapse development and synaptic transmission by negatively regulating the daf-2/InsR pathway in muscles. By targeting convertase egl-3 for degradation, negatively modulates insulin-like protein ins-4 and ins-6 processing. May stabilize synapse formation by promoting the down-regulation of scd-2. Regulates axon termination in PLM and ALM neurons. The sequence is that of F-box/SPRY domain-containing protein 1 (fsn-1) from Caenorhabditis briggsae.